A 385-amino-acid polypeptide reads, in one-letter code: Chaperone protein DnaJ (385 aa).

Residues 5–70 (DYYEVLGVSK…DKKAAYDRFG (66 aa)) enclose the J domain. The CR-type zinc-finger motif lies at 143 to 221 (GLSKQITVPS…CGGAGRQEKD (79 aa)). 8 residues coordinate Zn(2+): Cys-156, Cys-159, Cys-173, Cys-176, Cys-195, Cys-198, Cys-209, and Cys-212. CXXCXGXG motif repeat units follow at residues 156–163 (CSSCDGTG), 173–180 (CPTCSGMG), 195–202 (CPTCNGMG), and 209–216 (CRTCGGAG). The disordered stretch occupies residues 299–323 (GGRSRVRVPEGSQSGRQMRLRGKGM).

It belongs to the DnaJ family. Homodimer. The cofactor is Zn(2+).

It localises to the cytoplasm. In terms of biological role, participates actively in the response to hyperosmotic and heat shock by preventing the aggregation of stress-denatured proteins and by disaggregating proteins, also in an autonomous, DnaK-independent fashion. Unfolded proteins bind initially to DnaJ; upon interaction with the DnaJ-bound protein, DnaK hydrolyzes its bound ATP, resulting in the formation of a stable complex. GrpE releases ADP from DnaK; ATP binding to DnaK triggers the release of the substrate protein, thus completing the reaction cycle. Several rounds of ATP-dependent interactions between DnaJ, DnaK and GrpE are required for fully efficient folding. Also involved, together with DnaK and GrpE, in the DNA replication of plasmids through activation of initiation proteins. This Jannaschia sp. (strain CCS1) protein is Chaperone protein DnaJ.